The sequence spans 510 residues: NAD(P)H-quinone oxidoreductase subunit 2 A, chloroplastic (510 aa).

Helical transmembrane passes span 31 to 51 (FIFP…IDLT), 57 to 77 (TPWL…ALLF), 99 to 119 (IFQF…VEYI), 124 to 144 (MAIT…MFLC), 149 to 169 (LITI…LSGY), 183 to 203 (YLLM…WLYG), 229 to 249 (ISIA…PAPF), 295 to 315 (WHLL…LIAI), 323 to 343 (MLAY…IVGD), 354 to 374 (YMLF…LFGL), 395 to 415 (ALSS…AGFF), 418 to 438 (LYLF…IGLL), and 484 to 504 (MIVC…IIAI).

The protein belongs to the complex I subunit 2 family. NDH is composed of at least 16 different subunits, 5 of which are encoded in the nucleus.

It is found in the plastid. The protein localises to the chloroplast thylakoid membrane. It carries out the reaction a plastoquinone + NADH + (n+1) H(+)(in) = a plastoquinol + NAD(+) + n H(+)(out). It catalyses the reaction a plastoquinone + NADPH + (n+1) H(+)(in) = a plastoquinol + NADP(+) + n H(+)(out). NDH shuttles electrons from NAD(P)H:plastoquinone, via FMN and iron-sulfur (Fe-S) centers, to quinones in the photosynthetic chain and possibly in a chloroplast respiratory chain. The immediate electron acceptor for the enzyme in this species is believed to be plastoquinone. Couples the redox reaction to proton translocation, and thus conserves the redox energy in a proton gradient. In Nymphaea alba (White water-lily), this protein is NAD(P)H-quinone oxidoreductase subunit 2 A, chloroplastic.